The sequence spans 275 residues: Phosphate import ATP-binding protein PstB 2 (275 aa).

Positions Leu-29–Ile-270 constitute an ABC transporter domain. Gly-61–Ser-68 is an ATP binding site.

This sequence belongs to the ABC transporter superfamily. Phosphate importer (TC 3.A.1.7) family. The complex is composed of two ATP-binding proteins (PstB), two transmembrane proteins (PstC and PstA) and a solute-binding protein (PstS).

The protein localises to the cell membrane. The catalysed reaction is phosphate(out) + ATP + H2O = ADP + 2 phosphate(in) + H(+). Functionally, part of the ABC transporter complex PstSACB involved in phosphate import. Responsible for energy coupling to the transport system. The polypeptide is Phosphate import ATP-binding protein PstB 2 (Bacillus licheniformis (strain ATCC 14580 / DSM 13 / JCM 2505 / CCUG 7422 / NBRC 12200 / NCIMB 9375 / NCTC 10341 / NRRL NRS-1264 / Gibson 46)).